A 316-amino-acid polypeptide reads, in one-letter code: Solute carrier family 25 member 32 (316 aa).

3 Solcar repeats span residues 20 to 109 (HVRY…IKSY), 118 to 209 (LEPL…LKLK), and 222 to 306 (LSTA…VSHF). 6 consecutive transmembrane segments (helical) span residues 26 to 46 (LVAG…LDLV), 89 to 106 (VWGA…YNAI), 123 to 143 (YLVS…PLWV), 185 to 203 (GFVP…FMAY), 227 to 243 (YISV…AATY), and 281 to 300 (GIAP…FVVY).

It belongs to the mitochondrial carrier (TC 2.A.29) family.

It localises to the mitochondrion inner membrane. It catalyses the reaction FAD(in) = FAD(out). In terms of biological role, facilitates flavin adenine dinucleotide (FAD) translocation across the mitochondrial inner membrane into the mitochondrial matrix where it acts as a redox cofactor to assist flavoenzyme activities in fundamental metabolic processes including fatty acid beta-oxidation, amino acid and choline metabolism as well as mitochondrial electron transportation. In particular, provides FAD to DLD dehydrogenase of the glycine cleavage system, part of mitochondrial one-carbon metabolic pathway involved in neural tube closure in early embryogenesis. This is Solute carrier family 25 member 32 from Mus musculus (Mouse).